Consider the following 372-residue polypeptide: Putative 26S proteasome regulatory subunit homolog MTBMA_c13930 (372 aa).

An ATP-binding site is contributed by 164–171 (GSPGTGKT).

Belongs to the AAA ATPase family.

The 26S proteasome is involved in the ATP-dependent degradation of ubiquitinated proteins. The regulatory (or ATPase) complex confers ATP dependency and substrate specificity to the 26S complex. The chain is Putative 26S proteasome regulatory subunit homolog MTBMA_c13930 from Methanothermobacter marburgensis (strain ATCC BAA-927 / DSM 2133 / JCM 14651 / NBRC 100331 / OCM 82 / Marburg) (Methanobacterium thermoautotrophicum).